The chain runs to 92 residues: N(2)-fixation sustaining protein CowN (92 aa).

The protein belongs to the CowN family.

In terms of biological role, is required to sustain N(2)-dependent growth in the presence of low levels of carbon monoxide (CO). Probably acts by protecting the N(2) fixation ability of the nitrogenase complex, which is inactivated in the presence of CO. The protein is N(2)-fixation sustaining protein CowN of Rhodopseudomonas palustris (strain ATCC BAA-98 / CGA009).